Reading from the N-terminus, the 305-residue chain is Acetyl-coenzyme A carboxylase carboxyl transferase subunit beta (305 aa).

The CoA carboxyltransferase N-terminal domain occupies valine 25–serine 294. Residues cysteine 29, cysteine 32, cysteine 48, and cysteine 51 each contribute to the Zn(2+) site. The segment at cysteine 29–cysteine 51 adopts a C4-type zinc-finger fold. Residues asparagine 281–alanine 305 are disordered.

The protein belongs to the AccD/PCCB family. In terms of assembly, acetyl-CoA carboxylase is a heterohexamer composed of biotin carboxyl carrier protein (AccB), biotin carboxylase (AccC) and two subunits each of ACCase subunit alpha (AccA) and ACCase subunit beta (AccD). It depends on Zn(2+) as a cofactor.

Its subcellular location is the cytoplasm. It catalyses the reaction N(6)-carboxybiotinyl-L-lysyl-[protein] + acetyl-CoA = N(6)-biotinyl-L-lysyl-[protein] + malonyl-CoA. The protein operates within lipid metabolism; malonyl-CoA biosynthesis; malonyl-CoA from acetyl-CoA: step 1/1. Functionally, component of the acetyl coenzyme A carboxylase (ACC) complex. Biotin carboxylase (BC) catalyzes the carboxylation of biotin on its carrier protein (BCCP) and then the CO(2) group is transferred by the transcarboxylase to acetyl-CoA to form malonyl-CoA. In Pectobacterium atrosepticum (strain SCRI 1043 / ATCC BAA-672) (Erwinia carotovora subsp. atroseptica), this protein is Acetyl-coenzyme A carboxylase carboxyl transferase subunit beta.